Reading from the N-terminus, the 321-residue chain is N-acetyllactosaminide alpha-1,3-galactosyltransferase-like 1 (321 aa).

Over 1-6 (MQYKKE) the chain is Cytoplasmic. The helical; Signal-anchor for type II membrane protein transmembrane segment at 7–24 (TLLLILLAILLALTQRYS) threads the bilayer. Over 25–321 (RTKDHLQKMY…IKVAWQPRIT (297 aa)) the chain is Lumenal. Asn-87 and Asn-99 each carry an N-linked (GlcNAc...) asparagine glycan. Residues 95–100 (FATGNF), 187–189 (TAN), and 209–212 (HAWW) each bind substrate. Glu-277 serves as the catalytic Nucleophile.

Belongs to the glycosyltransferase 6 family. Mn(2+) serves as cofactor.

The protein resides in the golgi apparatus. It is found in the golgi stack membrane. The catalysed reaction is a beta-D-galactosyl-(1-&gt;4)-N-acetyl-beta-D-glucosaminyl derivative + UDP-alpha-D-galactose = an alpha-D-galactosyl-(1-&gt;3)-beta-D-galactosyl-(1-&gt;4)-N-acetyl-beta-D-glucosaminyl derivative + UDP + H(+). It participates in protein modification; protein glycosylation. Synthesizes the galactose-alpha(1,3)-galactose group by catalyzing the transfer of a galactose residue, with an alpha-1,3 linkage, on terminal lactosaminide (Gal-beta-1,4-GlcNAc-R) disaccharide borne by a glycoprotein or a glycolipid. The sequence is that of N-acetyllactosaminide alpha-1,3-galactosyltransferase-like 1 (Ggta1l1) from Rattus norvegicus (Rat).